Here is a 284-residue protein sequence, read N- to C-terminus: GPN-loop GTPase 3 (284 aa).

13–18 contributes to the GTP binding site; it reads GSGKST. A Gly-Pro-Asn (GPN)-loop; involved in dimer interface motif is present at residues 72 to 74; sequence GPN. GTP is bound at residue 174-177; sequence TKMD. Residues 262–284 form a disordered region; sequence EPREHEEESSSMFDEYFQERQNE.

This sequence belongs to the GPN-loop GTPase family. In terms of assembly, heterodimer with GPN1. Binds to RNA polymerase II (RNAPII). Interacts directly with subunits RPB4 and RPB7 and the CTD of RPB1.

Small GTPase required for proper localization of RNA polymerase II (RNAPII). May act at an RNAP assembly step prior to nuclear import. This chain is GPN-loop GTPase 3, found in Mus musculus (Mouse).